We begin with the raw amino-acid sequence, 540 residues long: Phosphoenolpyruvate carboxykinase (ATP) (540 aa).

Substrate contacts are provided by R67, Y207, and K213. ATP-binding positions include K213, H232, and 248 to 256 (GLSGTGKTT). The Mn(2+) site is built by K213 and H232. Mn(2+) is bound at residue D269. ATP is bound by residues E297, R333, 449 to 450 (RI), and T455. Residue R333 participates in substrate binding.

The protein belongs to the phosphoenolpyruvate carboxykinase (ATP) family. As to quaternary structure, monomer. Mn(2+) serves as cofactor.

Its subcellular location is the cytoplasm. It catalyses the reaction oxaloacetate + ATP = phosphoenolpyruvate + ADP + CO2. It participates in carbohydrate biosynthesis; gluconeogenesis. Its function is as follows. Involved in the gluconeogenesis. Catalyzes the conversion of oxaloacetate (OAA) to phosphoenolpyruvate (PEP) through direct phosphoryl transfer between the nucleoside triphosphate and OAA. The chain is Phosphoenolpyruvate carboxykinase (ATP) from Aliivibrio fischeri (strain MJ11) (Vibrio fischeri).